We begin with the raw amino-acid sequence, 269 residues long: MFKIYAVSDSIGETAEQVANATAYQFGSSVKVERVPYVKTFEDVNNLISIIKNPNEAMIISTIVLVDIREFLVQRCVESGIHISNVLGPCISLVSTILNKTPEYKPGAVWDMDKKYYKKIEAMEFAIRYDDSKDHSGIKHADIVLIGLSRTSKTPLSIYLANKGIKALNIPLMPEVPVPEELFEIDRKKIIGLTIDPMHLIEIRRHRVDNMMKIPTELKYANAERVLDELEFADKIMRKLKCKVIDVTKRAIEDTALIIMESVFSDRII.

Residue 147 to 154 coordinates ADP; it reads GLSRTSKT.

The protein belongs to the pyruvate, phosphate/water dikinase regulatory protein family. PDRP subfamily.

The catalysed reaction is N(tele)-phospho-L-histidyl/L-threonyl-[pyruvate, phosphate dikinase] + ADP = N(tele)-phospho-L-histidyl/O-phospho-L-threonyl-[pyruvate, phosphate dikinase] + AMP + H(+). The enzyme catalyses N(tele)-phospho-L-histidyl/O-phospho-L-threonyl-[pyruvate, phosphate dikinase] + phosphate + H(+) = N(tele)-phospho-L-histidyl/L-threonyl-[pyruvate, phosphate dikinase] + diphosphate. Its function is as follows. Bifunctional serine/threonine kinase and phosphorylase involved in the regulation of the pyruvate, phosphate dikinase (PPDK) by catalyzing its phosphorylation/dephosphorylation. The polypeptide is Putative pyruvate, phosphate dikinase regulatory protein (Clostridium botulinum (strain ATCC 19397 / Type A)).